The sequence spans 111 residues: Ribonuclease P protein component (111 aa).

Belongs to the RnpA family. Consists of a catalytic RNA component (M1 or rnpB) and a protein subunit.

It carries out the reaction Endonucleolytic cleavage of RNA, removing 5'-extranucleotides from tRNA precursor.. Functionally, RNaseP catalyzes the removal of the 5'-leader sequence from pre-tRNA to produce the mature 5'-terminus. It can also cleave other RNA substrates such as 4.5S RNA. The protein component plays an auxiliary but essential role in vivo by binding to the 5'-leader sequence and broadening the substrate specificity of the ribozyme. The polypeptide is Ribonuclease P protein component (Mycoplasmopsis pulmonis (strain UAB CTIP) (Mycoplasma pulmonis)).